We begin with the raw amino-acid sequence, 569 residues long: Oxygen-dependent choline dehydrogenase (569 aa).

9 to 38 (DYVIIGGGSAGSVLGNRLSEDKDKEVLVLE) is a binding site for FAD. H475 serves as the catalytic Proton acceptor.

This sequence belongs to the GMC oxidoreductase family. FAD serves as cofactor.

The catalysed reaction is choline + A = betaine aldehyde + AH2. It catalyses the reaction betaine aldehyde + NAD(+) + H2O = glycine betaine + NADH + 2 H(+). The protein operates within amine and polyamine biosynthesis; betaine biosynthesis via choline pathway; betaine aldehyde from choline (cytochrome c reductase route): step 1/1. Involved in the biosynthesis of the osmoprotectant glycine betaine. Catalyzes the oxidation of choline to betaine aldehyde and betaine aldehyde to glycine betaine at the same rate. This chain is Oxygen-dependent choline dehydrogenase, found in Staphylococcus aureus (strain COL).